The chain runs to 190 residues: MTVGVLALQGDFREHCAVLRRIGVEPIEVRLPHQLAQVDHLIIPGGESTTIGRLLAIYQMLEPIRTRGGCDLAIWGTCAGAILLANEVMDQKQGGQPTLGLMNLTIRRNAYGSQLDSFEAPITMPIIGEEPLPGVFIRAPQIMALGQGCEAVGWLEDGSVVAARQGRLLATTFHPELTHDDRVHRLFLEL.

Position 46 to 48 (46 to 48 (GES)) interacts with L-glutamine. Residue Cys78 is the Nucleophile of the active site. L-glutamine-binding positions include Arg108 and 137 to 138 (IR). Catalysis depends on charge relay system residues His174 and Glu176.

Belongs to the glutaminase PdxT/SNO family. In terms of assembly, in the presence of PdxS, forms a dodecamer of heterodimers. Only shows activity in the heterodimer.

It carries out the reaction aldehydo-D-ribose 5-phosphate + D-glyceraldehyde 3-phosphate + L-glutamine = pyridoxal 5'-phosphate + L-glutamate + phosphate + 3 H2O + H(+). It catalyses the reaction L-glutamine + H2O = L-glutamate + NH4(+). It participates in cofactor biosynthesis; pyridoxal 5'-phosphate biosynthesis. Functionally, catalyzes the hydrolysis of glutamine to glutamate and ammonia as part of the biosynthesis of pyridoxal 5'-phosphate. The resulting ammonia molecule is channeled to the active site of PdxS. In Chloroflexus aggregans (strain MD-66 / DSM 9485), this protein is Pyridoxal 5'-phosphate synthase subunit PdxT.